The chain runs to 337 residues: Palmitoyltransferase ZDHHC15 (337 aa).

Residues 1–20 (MRRGWKMALSGGLRCCRRVL) lie on the Cytoplasmic side of the membrane. A helical membrane pass occupies residues 21 to 41 (SWVPVLVIVLVVLWSYYAYVF). The Lumenal segment spans residues 42–56 (ELCLVTVLSPAEKVI). The helical transmembrane segment at 57–77 (YLILYHAIFVFFTWTYWKSIF) threads the bilayer. At 78–172 (TLPQQPNQKF…NNCIGFSNYK (95 aa)) the chain is on the cytoplasmic side. The DHHC domain maps to 129 to 179 (RFCDRCHLIKPDRCHHCSVCAMCVLKMDHHCPWVNNCIGFSNYKFFLQFLA). Zn(2+) contacts are provided by C131, C134, H144, C145, C148, C151, and H158. Residue C159 is the S-palmitoyl cysteine intermediate of the active site. C165 provides a ligand contact to Zn(2+). A helical membrane pass occupies residues 173 to 193 (FFLQFLAYSVLYCLYIATTVF). Residues 194-210 (SYFIKYWRGELPSVRSK) lie on the Lumenal side of the membrane. A helical transmembrane segment spans residues 211-234 (FHVLFLLFVACMFFVSLVILFGYH). Residues 235–337 (CWLVSRNKTT…SSSLAVETET (103 aa)) are Cytoplasmic-facing. A disordered region spans residues 306-337 (PLLANEETWEDNEDDNQDYPEGSSSLAVETET). Acidic residues predominate over residues 312–323 (ETWEDNEDDNQD). The span at 327 to 337 (GSSSLAVETET) shows a compositional bias: polar residues.

This sequence belongs to the DHHC palmitoyltransferase family. Autopalmitoylated (in vitro). As to expression, expressed in placenta, liver, lung, kidney, heart and brain.

Its subcellular location is the golgi apparatus membrane. It localises to the postsynaptic density. It carries out the reaction L-cysteinyl-[protein] + hexadecanoyl-CoA = S-hexadecanoyl-L-cysteinyl-[protein] + CoA. The enzyme catalyses L-cysteinyl-[protein] + tetradecanoyl-CoA = S-tetradecanoyl-L-cysteinyl-[protein] + CoA. It catalyses the reaction L-cysteinyl-[protein] + octadecanoyl-CoA = S-octadecanoyl-L-cysteinyl-[protein] + CoA. Functionally, palmitoyltransferase that catalyzes the addition of palmitate onto various protein substrates. Has no stringent fatty acid selectivity and in addition to palmitate can also transfer onto target proteins myristate from tetradecanoyl-CoA and stearate from octadecanoyl-CoA. Palmitoylates IGF2R and SORT1, promoting their partitioning to an endosomal membrane subdomain where they can interact with the retromer cargo-selective complex. Thereby, regulates retrograde transport from endosomes to the Golgi apparatus of these lysosomal sorting receptors and plays a role in trafficking of lysosomal proteins. In the nervous system, catalyzes the palmitoylation of DLG4/PSD95 and regulates its synaptic clustering and function in synaptogenesis. Could be involved in the differentiation of dopaminergic neurons and the development of the diencephalon. Could also catalyze the palmitoylation of GAP43. Could also palmitoylate DNAJC5 and regulate its localization to the Golgi membrane. Could also palmitoylate FYN as shown in vitro. May palmitoylate CALHM3 subunit of gustatory voltage-gated ion channels and modulate channel gating and kinetics. This Homo sapiens (Human) protein is Palmitoyltransferase ZDHHC15.